The following is a 564-amino-acid chain: Dihydroxy-acid dehydratase (564 aa).

Residue cysteine 53 coordinates [2Fe-2S] cluster. Aspartate 85 provides a ligand contact to Mg(2+). Cysteine 126 lines the [2Fe-2S] cluster pocket. Aspartate 127 and lysine 128 together coordinate Mg(2+). Lysine 128 carries the post-translational modification N6-carboxylysine. Cysteine 203 provides a ligand contact to [2Fe-2S] cluster. Glutamate 454 serves as a coordination point for Mg(2+). Residue serine 480 is the Proton acceptor of the active site.

The protein belongs to the IlvD/Edd family. As to quaternary structure, homodimer. Requires [2Fe-2S] cluster as cofactor. Mg(2+) is required as a cofactor.

The catalysed reaction is (2R)-2,3-dihydroxy-3-methylbutanoate = 3-methyl-2-oxobutanoate + H2O. It carries out the reaction (2R,3R)-2,3-dihydroxy-3-methylpentanoate = (S)-3-methyl-2-oxopentanoate + H2O. Its pathway is amino-acid biosynthesis; L-isoleucine biosynthesis; L-isoleucine from 2-oxobutanoate: step 3/4. It functions in the pathway amino-acid biosynthesis; L-valine biosynthesis; L-valine from pyruvate: step 3/4. Functions in the biosynthesis of branched-chain amino acids. Catalyzes the dehydration of (2R,3R)-2,3-dihydroxy-3-methylpentanoate (2,3-dihydroxy-3-methylvalerate) into 2-oxo-3-methylpentanoate (2-oxo-3-methylvalerate) and of (2R)-2,3-dihydroxy-3-methylbutanoate (2,3-dihydroxyisovalerate) into 2-oxo-3-methylbutanoate (2-oxoisovalerate), the penultimate precursor to L-isoleucine and L-valine, respectively. The chain is Dihydroxy-acid dehydratase from Clavibacter michiganensis subsp. michiganensis (strain NCPPB 382).